The following is an 812-amino-acid chain: Zn(2)-C6 fungal-type transcription factor pigI (812 aa).

The interval 42-74 is disordered; the sequence is GCLHPRSPPRDRTAMADNSNSSPPASRRREKPQ. The segment at residues 77-105 is a DNA-binding region (zn(2)-C6 fungal-type); it reads CTLCRRRKLRCDRRQPCETCVRRGLSLSC.

The protein localises to the nucleus. Its function is as follows. Zn(2)-C6 fungal-type transcription factor; part of the gene cluster that mediates the biosynthesis of azaphilone pigments (MonAzPs), a complex mixture of compounds with a common azaphilone skeleton very widely used as food colorants. Acts probably as a negative regulator of the azaphilone pigments (MonAzPs) gene cluster. The sequence is that of Zn(2)-C6 fungal-type transcription factor pigI from Monascus ruber (Mold).